We begin with the raw amino-acid sequence, 578 residues long: Laccase-10 (578 aa).

The first 29 residues, 1–29 (MGARCLALLLLYGTLLLLLLLPQLPLAGA), serve as a signal peptide directing secretion. Plastocyanin-like domains lie at 37–153 (NVKL…PKAG) and 163–319 (KDVP…YAPP). N-linked (GlcNAc...) asparagine glycosylation is found at Asn-42 and Asn-83. Residues His-87 and His-89 each contribute to the Cu cation site. N-linked (GlcNAc...) asparagine glycosylation occurs at Asn-119. Residues His-132 and His-134 each contribute to the Cu cation site. Residues Asn-192, Asn-208, Asn-244, Asn-307, Asn-336, Asn-384, Asn-392, Asn-402, Asn-438, Asn-445, Asn-448, Asn-451, and Asn-461 are each glycosylated (N-linked (GlcNAc...) asparagine). The 135-residue stretch at 428 to 562 (DFPASPLEPF…KMAWVVNDGP (135 aa)) folds into the Plastocyanin-like 3 domain. Cu cation is bound by residues His-479, His-482, His-484, His-541, Cys-542, His-543, and His-547.

The protein belongs to the multicopper oxidase family. Cu cation serves as cofactor.

The protein resides in the secreted. It localises to the extracellular space. It is found in the apoplast. It catalyses the reaction 4 hydroquinone + O2 = 4 benzosemiquinone + 2 H2O. Its function is as follows. Lignin degradation and detoxification of lignin-derived products. In Oryza sativa subsp. japonica (Rice), this protein is Laccase-10 (LAC10).